The sequence spans 258 residues: ATP synthase subunit a (258 aa).

5 consecutive transmembrane segments (helical) span residues 38–58 (KPVWFLWLGAAITFLFMYVGA), 94–114 (WFPYSLTLFIFLLVLNIIGLF), 118–138 (YPVTSNISFTATLALFTFVLT), 193–213 (ILAGHLIIFVFLSLILYFGLP), and 215–235 (AFVSVPFAVVFYAFEIFVAVI).

It belongs to the ATPase A chain family. F-type ATPases have 2 components, CF(1) - the catalytic core - and CF(0) - the membrane proton channel. CF(1) has five subunits: alpha(3), beta(3), gamma(1), delta(1), epsilon(1). CF(0) has three main subunits: a(1), b(2) and c(9-12). The alpha and beta chains form an alternating ring which encloses part of the gamma chain. CF(1) is attached to CF(0) by a central stalk formed by the gamma and epsilon chains, while a peripheral stalk is formed by the delta and b chains.

Its subcellular location is the cell membrane. Its function is as follows. Key component of the proton channel; it plays a direct role in the translocation of protons across the membrane. The polypeptide is ATP synthase subunit a (Rubrobacter xylanophilus (strain DSM 9941 / JCM 11954 / NBRC 16129 / PRD-1)).